A 276-amino-acid polypeptide reads, in one-letter code: Undecaprenyl-diphosphatase 2 (276 aa).

8 helical membrane passes run 4–24 (IEAL…VSSL), 44–64 (DFLP…LIYF), 87–107 (ARLM…GLLL), 114–134 (LFAS…LLLW), 150–170 (LSFA…LPGF), 193–213 (FSFL…IPKL), 225–245 (LLLA…WFLM), and 256–276 (LRPF…FKLV).

The protein belongs to the UppP family.

It is found in the cell inner membrane. It catalyses the reaction di-trans,octa-cis-undecaprenyl diphosphate + H2O = di-trans,octa-cis-undecaprenyl phosphate + phosphate + H(+). Its function is as follows. Catalyzes the dephosphorylation of undecaprenyl diphosphate (UPP). Confers resistance to bacitracin. The chain is Undecaprenyl-diphosphatase 2 from Chromobacterium violaceum (strain ATCC 12472 / DSM 30191 / JCM 1249 / CCUG 213 / NBRC 12614 / NCIMB 9131 / NCTC 9757 / MK).